A 236-amino-acid polypeptide reads, in one-letter code: MILLVSPKDVAEAHEAIEGGADIIDVKNPPEGSLGANFPWVIKETREATPEGMLVSAAIGDVPYKPGTVTLAALGAAISGADYIKVGLYGTRSYQEALDVMKNVTKAVKDSGENKIVVAAGYADAYRVGGVDPLIIPRVARDAGCDVAMLDTAVKDGKTLFDHMSIELLKEFVEETHKYGMKCALAGSIKIEEIPMLKEINCDIVGVRGAACTKGDRNEGRIQKDLVKEIVKVCRQ.

The active-site Schiff-base intermediate with substrate is K27. K85 functions as the Proton acceptor in the catalytic mechanism.

This sequence belongs to the MfnB family.

The catalysed reaction is 2 D-glyceraldehyde 3-phosphate = 4-(hydroxymethyl)-2-furancarboxaldehyde phosphate + phosphate + 2 H2O. It participates in cofactor biosynthesis; methanofuran biosynthesis. Its function is as follows. Catalyzes the formation of 4-(hydroxymethyl)-2-furancarboxaldehyde phosphate (4-HFC-P) from two molecules of glyceraldehyde-3-P (GA-3-P). This chain is (5-formylfuran-3-yl)methyl phosphate synthase, found in Methanococcus maripaludis (strain C7 / ATCC BAA-1331).